The primary structure comprises 131 residues: Small ribosomal subunit protein uS8 (131 aa).

This sequence belongs to the universal ribosomal protein uS8 family. Part of the 30S ribosomal subunit. Contacts proteins S5 and S12.

One of the primary rRNA binding proteins, it binds directly to 16S rRNA central domain where it helps coordinate assembly of the platform of the 30S subunit. This chain is Small ribosomal subunit protein uS8, found in Delftia acidovorans (strain DSM 14801 / SPH-1).